Here is a 431-residue protein sequence, read N- to C-terminus: 5-methylthioadenosine/S-adenosylhomocysteine deaminase (431 aa).

Histidine 60 and histidine 62 together coordinate Zn(2+). Substrate contacts are provided by glutamate 89 and histidine 182. Histidine 209 is a binding site for Zn(2+). The substrate site is built by glutamate 212 and aspartate 297. A Zn(2+)-binding site is contributed by aspartate 297.

Belongs to the metallo-dependent hydrolases superfamily. MTA/SAH deaminase family. Zn(2+) serves as cofactor.

It carries out the reaction S-adenosyl-L-homocysteine + H2O + H(+) = S-inosyl-L-homocysteine + NH4(+). The enzyme catalyses S-methyl-5'-thioadenosine + H2O + H(+) = S-methyl-5'-thioinosine + NH4(+). In terms of biological role, catalyzes the deamination of 5-methylthioadenosine and S-adenosyl-L-homocysteine into 5-methylthioinosine and S-inosyl-L-homocysteine, respectively. Is also able to deaminate adenosine. The protein is 5-methylthioadenosine/S-adenosylhomocysteine deaminase of Natronomonas pharaonis (strain ATCC 35678 / DSM 2160 / CIP 103997 / JCM 8858 / NBRC 14720 / NCIMB 2260 / Gabara) (Halobacterium pharaonis).